The sequence spans 581 residues: Estrogen receptor (581 aa).

The tract at residues 1–144 (MYPEDSRGSG…GFEIAKEMRF (144 aa)) is modulating. 2 disordered regions span residues 45 to 66 (APLDAHGPPSDGSLQSLGSGPN) and 96 to 122 (PVYRSSVPSSQQSVSREDQCGTSDDSY). Polar residues predominate over residues 56-66 (GSLQSLGSGPN). Over residues 100-109 (SSVPSSQQSV) the composition is skewed to low complexity. 2 NR C4-type zinc fingers span residues 145–165 (CAVCSDYASGYHYGVWSCEGC) and 181–205 (CPATNQCTIDRNRRKSCQACRLRKC). The segment at residues 145–210 (CAVCSDYASG…RLRKCYEVGM (66 aa)) is a DNA-binding region (nuclear receptor). The interval 211-272 (MKGGMRKDRG…GGGKSSMISM (62 aa)) is hinge. Positions 216-246 (RKDRGRVLRRDKQRTGTSDRDKASKGLEHRT) are enriched in basic and acidic residues. The tract at residues 216 to 268 (RKDRGRVLRRDKQRTGTSDRDKASKGLEHRTAPPQDRRKHISSSAGGGGGKSS) is disordered. One can recognise an NR LBD domain in the interval 273–509 (PPDQVLLLLQ…DLLLEMLDAH (237 aa)). A compositionally biased stretch (basic and acidic residues) spans 516–528 (RPAETWSQADREP). The disordered stretch occupies residues 516 to 581 (RPAETWSQAD…GSRSECTHIL (66 aa)). The segment covering 536–547 (SGGGGGGGGGSS) has biased composition (gly residues).

The protein belongs to the nuclear hormone receptor family. NR3 subfamily. As to quaternary structure, binds DNA as a homodimer. Can form a heterodimer with ER-beta.

Its subcellular location is the nucleus. Functionally, the steroid hormones and their receptors are involved in the regulation of eukaryotic gene expression and affect cellular proliferation and differentiation in target tissues. This is Estrogen receptor (esr1) from Pagrus major (Red sea bream).